Here is a 1752-residue protein sequence, read N- to C-terminus: DNA-directed RNA polymerase II subunit rpb1 (1752 aa).

Residues C69, C72, C79, H82, C109, C112, C150, and C175 each coordinate Zn(2+). Residues D487, D489, and D491 each contribute to the Mg(2+) site. The bridging helix stretch occupies residues 816 to 828; it reads PQEFFFHAMAGRE. K1252 is covalently cross-linked (Glycyl lysine isopeptide (Lys-Gly) (interchain with G-Cter in ubiquitin)). Phosphoserine is present on residues S1489, S1499, S1506, and S1529. Y1531 bears the Phosphotyrosine mark. Residues 1554–1752 form a disordered region; the sequence is TSPSYSPSSP…SPSYSPTSPS (199 aa). Repeat copies occupy residues 1558 to 1564, 1578 to 1584, 1585 to 1591, 1592 to 1598, and 1599 to 1605. Residues 1558 to 1752 form a C-terminal domain (CTD); 26 X 7 AA approximate tandem repeats of Y-S-P-[TS]-S-P-S region; it reads YSPSSPGYST…SPSYSPTSPS (195 aa). Residues 1606–1612 form a 6; approximate repeat; it reads YSATSPS. 20 tandem repeats follow at residues 1613-1619, 1620-1626, 1627-1633, 1634-1640, 1641-1647, 1648-1654, 1655-1661, 1662-1668, 1669-1675, 1676-1682, 1683-1689, 1690-1696, 1697-1703, 1704-1710, 1711-1717, 1718-1724, 1725-1731, 1732-1738, 1739-1745, and 1746-1752.

It belongs to the RNA polymerase beta' chain family. As to quaternary structure, component of the RNA polymerase II (Pol II) complex consisting of 12 subunits. The tandem 7 residues repeats in the C-terminal domain (CTD) can be highly phosphorylated. The phosphorylation activates Pol II. Phosphorylation occurs mainly at residues 'Ser-2' and 'Ser-5' of the heptapeptide repeat. The phosphorylation state is believed to result from the balanced action of site-specific CTD kinases and phosphatase, and a 'CTD code' that specifies the position of Pol II within the transcription cycle has been proposed. Post-translationally, following transcription stress, the elongating form of RNA polymerase II (RNA pol IIo) is polyubiquitinated via 'Lys-63'-linkages on Lys-1252 at DNA damage sites without leading to degradation: ubiquitination promotes RNA pol IIo backtracking to allow access by the transcription-coupled nucleotide excision repair (TC-NER) machinery. Subsequent def1-dependent polyubiquitination by the elongin complex via 'Lys-48'-linkages may lead to proteasome-mediated degradation; presumably at stalled RNA pol II where TC-NER has failed, to halt global transcription and enable 'last resort' DNA repair pathways.

The protein resides in the nucleus. The catalysed reaction is RNA(n) + a ribonucleoside 5'-triphosphate = RNA(n+1) + diphosphate. In terms of biological role, DNA-dependent RNA polymerase catalyzes the transcription of DNA into RNA using the four ribonucleoside triphosphates as substrates. Largest and catalytic component of RNA polymerase II which synthesizes mRNA precursors and many functional non-coding RNAs. Forms the polymerase active center together with the second largest subunit. Pol II is the central component of the basal RNA polymerase II transcription machinery. It is composed of mobile elements that move relative to each other. RPB1 is part of the core element with the central large cleft, the clamp element that moves to open and close the cleft and the jaws that are thought to grab the incoming DNA template. At the start of transcription, a single-stranded DNA template strand of the promoter is positioned within the central active site cleft of Pol II. A bridging helix emanates from RPB1 and crosses the cleft near the catalytic site and is thought to promote translocation of Pol II by acting as a ratchet that moves the RNA-DNA hybrid through the active site by switching from straight to bent conformations at each step of nucleotide addition. During transcription elongation, Pol II moves on the template as the transcript elongates. Elongation is influenced by the phosphorylation status of the C-terminal domain (CTD) of Pol II largest subunit (RPB1), which serves as a platform for assembly of factors that regulate transcription initiation, elongation, termination and mRNA processing. The protein is DNA-directed RNA polymerase II subunit rpb1 (rpb1) of Schizosaccharomyces pombe (strain 972 / ATCC 24843) (Fission yeast).